The chain runs to 2298 residues: MKGHQFKSWIFELREILREIKNSHYFLDSWTQFNSVGSFIHIFFHQERFIKLLDPRIWSILLSRNSQGSTSNRYFTIKGVVLFVVAVLIYRINNRNMVERKNLYLTGLLPIPMNSIGPRNDTLEESFGSSNINRLIVSLLYLPKGKKISESCFLDPKESTWVLPITKKCIMPESNRDSRWWRNWIGKKRDSSCKISNETVAGIEISFKEKDIKYLEFLFVYYMDDSIRKDHDWELFDRLSPSKRRNIINLNSGQLFEILVKDWICYLMFAFREKIPIEVEGFFKQQGAGSTIQSNDIEHVSHLFSRGKWAISLQNCAQFHMWQFRQDLFVSWGKNPHESDFLRNISRENWIWLDNVWLVNRDRFFSKVRNVSSNIQYDSTRSSFVQVTDSRQLKGSSDQSRDRFDSISNEDSEYHTLINQREIQQLKERSILWDPSFLQTERTEIESDRFPKCLSGYSSMSRLFTEREKRMNNHLLPEEIEEFLGNPTRSIRSFFSDRWSELHQGSNPTERSTRDQKLLKKEQDVSFVPSRRSENKEIVNIFKIITYLQNTVSFHPISSDPGCDMVPKDELGSSNKISFLNKNPFFDLFHLFHDQNRRGYTLHHDFESEERFQEMADLFTLSITEPDLVYYKGFAFSIDSYGLDQKQFLNEVFNSRDESKKKSLSALPPIFYEENESFYRRIRKKWVRISCGNELEDPKPKIVVFASNNIMEAVNQDRLIRNLIQIQYSTYGYIRNVLNRFIKKNRSDRNFEYGILRDQIGNDTLNHRTIMKYTINQHLSNLKKSQKKWFDPLILISRTERSMNRDPNAYRYKWSNGSKNFQEHLEHFVSEQKSRFQVVFVRLRINQYSIDWSEVIDKKDLSKSLRFFLSKLLLFLSKLLLFLSNSLPFFFVSFGNIPIHRSEIHIYELKGPNDQLCNQLLESIGLQIVHLKKLKPFLLDDHNTSQKPKFLINGGTISPFLVNKIPKWMIDSFHTRNNRRKSFDNMDFSMISHDQDNWLNPVKPFHRSSLISSFYKANRLRFLNNPHHFCFYCNKRFPFYVEKARINNYDFTYGQFLNILFIRNKIFSLCGGKKKHAFLGRDTISPSPIESQVSNIFISNDFPQSGDERYNLYKSFQFAIRSDPLVRRAIYSIADISGTPLTEGQIVNFERTYCQPLSDMNPSDSEEKNLHQYLNFNSNMGLIHTPCSEKYLPSEKRKKRSLCLKKCVEKGWMYRTFQRDSAFSTLSKRNLFQTYMPWFLTSTGYKYLNLIFLDTFSDLLPILSSSQKFVSIFHDIMHGSDISWRILQKKLCLPQWNLISEISSKCLHNFLLSEEMIHRNNESPLISTHLRSPNVQEFLYSILFLLLVAGYLVRTHLLFVSRAYSELQTEFEKVKSLMIPSYMIELRKLLDRYPTSELNSFWLKNLFLVALEQLGDSLEEIRGSAFGGNMLWGGGPAYGVKSIRSKKKYLNINLIDIIDLISIIPNPINRIIFSRNTRHLSHTSKEIYSLIRKRKNVSGDWIDEKIESWVANSDSIDDKEREFLVQFSTLTTEKRIDQILLSLTHSDHLSKNDSGYQMIEQPGPIYLRYLVDIHKKYLMNYEFNTSCLAERRIFLAHYQTITYSQTSCGANSFHFPSRGKPFSLRLALSPSRGILVIGSIGTGRSYLFKYLATNSYVPFITVFLNKFLDNKLKGFLIDDIDIDDSDDIDASDDIDASDAIDDSDAIDRDLDTELELLTMMNALTMDMMSEIDRFYITLQFELAKAMSPCIIWIPNIHDLDVNEANYLSLGLLVNYLSKDCERCSTRNILVIASTHIPQKVDPTLIAPNKLNTCIKIRRLLIPQQRKHFFTLSYTRGFHLEKKMFHTNGFGSITVGSNARDLVALTNEALSISITQKKSIIDTNTIRSALHRQTWDLRSQVRSVQDHGILFYQIGRAVVQNVLLSNCPLDPISIYMKKKSCNEGDSYLYKWYFELGTSMKKLTILLYLLSCSAGSVAQDLWSLPGPDEKNGITSYGFVENDSDLVHGLLEVEGALVGSSRTEKDCGQFDNDRVTLLLRSEPGNPLYMMQNGSCSIVDQRNLYEKYESEFEEGEGEGVLDPQQIEEDLFNHIVWAPRIWRPWGFLFDCIERPNELGFPYWAGSFRGKRIIYDEKDELQENDSAFLQSGTMQYQARDRSSKEQGFFRISQFIWDPADPLFFLFKDQPFVSVFSHREFFADEEMSKGLLTSQTDPPTSIYKRWFIKNTQEKHFELLIHRQRWLRTNSSLSNANGFFRSNTPSESYQYLSNLFLSNGRLLDQMTKTLLRKRWLFPDEMKIGFM.

Residue 1638–1645 (GSIGTGRS) coordinates ATP.

Belongs to the Ycf2 family.

Its subcellular location is the plastid. It is found in the chloroplast stroma. Functionally, probable ATPase of unknown function. Its presence in a non-photosynthetic plant (Epifagus virginiana) and experiments in tobacco indicate that it has an essential function which is probably not related to photosynthesis. This is Protein Ycf2 from Gossypium barbadense (Sea Island cotton).